A 235-amino-acid chain; its full sequence is RING-H2 finger protein ATL17 (235 aa).

Residues 1–21 (MLTTTILILLIVILMVSLHLY) traverse the membrane as a helical segment. The RING-type; atypical zinc finger occupies 76–118 (CSVCLSEFKDNESGRVMPNCKHTFHVHCIDMWFHSHSSCPLCR). Residues 143–167 (VYGDTNHHEGTETTGDSVPEDSQRK) form a disordered region.

This sequence belongs to the RING-type zinc finger family. ATL subfamily.

It is found in the membrane. The catalysed reaction is S-ubiquitinyl-[E2 ubiquitin-conjugating enzyme]-L-cysteine + [acceptor protein]-L-lysine = [E2 ubiquitin-conjugating enzyme]-L-cysteine + N(6)-ubiquitinyl-[acceptor protein]-L-lysine.. It functions in the pathway protein modification; protein ubiquitination. Functionally, may be involved in the early steps of the plant defense signaling pathway. The protein is RING-H2 finger protein ATL17 (ATL17) of Arabidopsis thaliana (Mouse-ear cress).